The chain runs to 119 residues: Large ribosomal subunit protein bL20 (119 aa).

It belongs to the bacterial ribosomal protein bL20 family.

In terms of biological role, binds directly to 23S ribosomal RNA and is necessary for the in vitro assembly process of the 50S ribosomal subunit. It is not involved in the protein synthesizing functions of that subunit. This chain is Large ribosomal subunit protein bL20, found in Bradyrhizobium sp. (strain BTAi1 / ATCC BAA-1182).